Consider the following 223-residue polypeptide: Phosphoribosylformylglycinamidine synthase subunit PurQ (223 aa).

The 220-residue stretch at 4–223 (FAVVVFPGTN…FRSMVEWARK (220 aa)) folds into the Glutamine amidotransferase type-1 domain. Cys85 acts as the Nucleophile in catalysis. Catalysis depends on residues His196 and Glu198.

In terms of assembly, part of the FGAM synthase complex composed of 1 PurL, 1 PurQ and 2 PurS subunits.

Its subcellular location is the cytoplasm. The catalysed reaction is N(2)-formyl-N(1)-(5-phospho-beta-D-ribosyl)glycinamide + L-glutamine + ATP + H2O = 2-formamido-N(1)-(5-O-phospho-beta-D-ribosyl)acetamidine + L-glutamate + ADP + phosphate + H(+). The enzyme catalyses L-glutamine + H2O = L-glutamate + NH4(+). It participates in purine metabolism; IMP biosynthesis via de novo pathway; 5-amino-1-(5-phospho-D-ribosyl)imidazole from N(2)-formyl-N(1)-(5-phospho-D-ribosyl)glycinamide: step 1/2. Its function is as follows. Part of the phosphoribosylformylglycinamidine synthase complex involved in the purines biosynthetic pathway. Catalyzes the ATP-dependent conversion of formylglycinamide ribonucleotide (FGAR) and glutamine to yield formylglycinamidine ribonucleotide (FGAM) and glutamate. The FGAM synthase complex is composed of three subunits. PurQ produces an ammonia molecule by converting glutamine to glutamate. PurL transfers the ammonia molecule to FGAR to form FGAM in an ATP-dependent manner. PurS interacts with PurQ and PurL and is thought to assist in the transfer of the ammonia molecule from PurQ to PurL. The sequence is that of Phosphoribosylformylglycinamidine synthase subunit PurQ from Thermococcus kodakarensis (strain ATCC BAA-918 / JCM 12380 / KOD1) (Pyrococcus kodakaraensis (strain KOD1)).